We begin with the raw amino-acid sequence, 293 residues long: Mycothiol S-conjugate amidase (293 aa).

Zn(2+) contacts are provided by His13, Asp16, and His144.

Belongs to the MshB deacetylase family. Mca subfamily. In terms of assembly, monomer. The cofactor is Zn(2+).

It carries out the reaction mycothiol S-conjugate + H2O = an N-acetyl-L-cysteine-S-conjugate + 1D-myo-inositol 2-amino-2-deoxy-alpha-D-glucopyranoside. In terms of biological role, a mycothiol (MSH, N-acetylcysteinyl-glucosaminyl-inositol) S-conjugate amidase, it recycles conjugated MSH to the N-acetyl cysteine conjugate (AcCys S-conjugate, a mercapturic acid) and the MSH precursor. Involved in MSH-dependent detoxification of a number of alkylating agents and antibiotics. The chain is Mycothiol S-conjugate amidase from Streptomyces coelicolor (strain ATCC BAA-471 / A3(2) / M145).